Consider the following 380-residue polypeptide: MAAPWWRAAFSVTGRCRGISTSASLSRRTPPLGPMPNEDIDVSNLERLEKYRSFERYRRRAEQEAHAPHWWRTYREYFLKETDPKDRINIGLPPPRVSRTQKLQERKRFLQELRANSEEERAARLRTASIPLEAVRAEWERTCGPYHKQRLAEYYGLYRDLFHGATFVPWVPLHVAYALGEEDLIPVYHGNEVTPTEASQAPEVTYEADKDSLWTLLFINLDGHLLEPDAEYLHWLVTNIPSNRVAEGQESCPYLPPFPARGSGFHRFAFLLFKQDKPINFSEDTRPSPCYQLAQRTFHTLDFYKKHQEAMTPAGLAFFQCRWDDSVTHTFHQLLDMREPVFEFVRPPPYHPKQKRFPHQQPLRYLDRYRDSHEPTYGIY.

Residues methionine 1 to serine 26 constitute a mitochondrion transit peptide. The stretch at serine 98–alanine 123 forms a coiled coil.

It belongs to the phosphatidylethanolamine-binding protein family. Mitochondrion-specific ribosomal protein mL38 subfamily. In terms of assembly, component of the mitochondrial ribosome large subunit (39S) which comprises a 16S rRNA and about 50 distinct proteins.

The protein resides in the mitochondrion. This is Large ribosomal subunit protein mL38 (Mrpl38) from Rattus norvegicus (Rat).